The primary structure comprises 494 residues: Tyrosinase (494 aa).

Cu cation is bound by residues His-38, His-53, Cys-64, His-224, His-228, and His-256.

This sequence belongs to the tyrosinase family. Cu(2+) is required as a cofactor.

The enzyme catalyses 2 L-dopa + O2 = 2 L-dopaquinone + 2 H2O. The catalysed reaction is L-tyrosine + O2 = L-dopaquinone + H2O. This Rhizobium meliloti (Ensifer meliloti) protein is Tyrosinase (mepA).